Here is a 966-residue protein sequence, read N- to C-terminus: Serine/threonine-protein phosphatase 6 regulatory subunit 2 (966 aa).

The residue at position 289 (Ser289) is a Phosphoserine. Basic and acidic residues-rich tracts occupy residues 408–424 (TEAS…HENG) and 669–687 (GPER…HRDA). Disordered regions lie at residues 408 to 436 (TEAS…PAAS) and 657 to 707 (GAPH…VEGD). A phosphoserine mark is found at Ser771 and Ser828. A disordered region spans residues 819-856 (ASDSSSSGGSHSEDGDQKAASAMDAVSRGPGREAPPLP).

This sequence belongs to the SAPS family. In terms of assembly, protein phosphatase 6 (PP6) holoenzyme is proposed to be a heterotrimeric complex formed by the catalytic subunit, a SAPS domain-containing subunit (PP6R) and an ankyrin repeat-domain containing regulatory subunit (ARS). Interacts with PPP6C and NFKBIE. Interacts with ANKRD28. As to expression, ubiquitously expressed with strongest expression in the testis followed by liver, heart, kidney, brain and placenta.

It localises to the cytoplasm. Its function is as follows. Regulatory subunit of protein phosphatase 6 (PP6). May function as a scaffolding PP6 subunit. Involved in the PP6-mediated dephosphorylation of NFKBIE opposing its degradation in response to TNF-alpha. This Homo sapiens (Human) protein is Serine/threonine-protein phosphatase 6 regulatory subunit 2 (PPP6R2).